Here is a 293-residue protein sequence, read N- to C-terminus: Glutamyl-Q tRNA(Asp) synthetase (293 aa).

L-glutamate contacts are provided by residues Arg-9–Ser-13 and Glu-45. A 'HIGH' region motif is present at residues Pro-12–Ser-22. Cys-101, Cys-103, Tyr-115, and Cys-119 together coordinate Zn(2+). L-glutamate contacts are provided by Tyr-172 and Arg-190. The 'KMSKS' region signature appears at Lys-228–Gln-232. Residue Lys-231 coordinates ATP.

Belongs to the class-I aminoacyl-tRNA synthetase family. GluQ subfamily. The cofactor is Zn(2+).

Catalyzes the tRNA-independent activation of glutamate in presence of ATP and the subsequent transfer of glutamate onto a tRNA(Asp). Glutamate is transferred on the 2-amino-5-(4,5-dihydroxy-2-cyclopenten-1-yl) moiety of the queuosine in the wobble position of the QUC anticodon. The polypeptide is Glutamyl-Q tRNA(Asp) synthetase (Shewanella frigidimarina (strain NCIMB 400)).